A 117-amino-acid chain; its full sequence is Appetite-regulating hormone (117 aa).

The first 23 residues, 1–23 (MPSPGTVCSLLLFSMLWADLAMA), serve as a signal peptide directing secretion. A lipid anchor (O-decanoyl serine; alternate) is attached at Ser26. Ser26 carries the O-hexanoyl serine; alternate lipid modification. Ser26 carries the O-octanoyl serine; alternate lipid modification. Residues 29 to 52 (SPEHQKVQQRKESKKPPAKLQPRA) form a disordered region. The segment covering 31 to 43 (EHQKVQQRKESKK) has biased composition (basic and acidic residues). Positions 52 to 75 (ALEGLIHPEDTSQVEGAEDELEIR) are cleaved as a propeptide — removed in mature form. At Leu98 the chain carries Leucine amide. Residues 99–117 (GKFLQDVLWEEADEVLADE) constitute a propeptide, removed in mature form.

This sequence belongs to the motilin family. Post-translationally, O-octanoylated by GOAT/MBOAT4. O-octanoylation or O-decanoylation is essential for ghrelin activity. The O-decanoylated forms Ghrelin-27-C10 and Ghrelin-28-C10 differ in the length of the carbon backbone of the carboxylic acid bound to Ser-26. A small fraction of ghrelin, ghrelin-27-C10:1, ghrelin-27-C10:2, ghrelin-28-C8:1, ghrelin-28-C10:1, and ghrelin-28-C10:2, may be modified with singly or doubly unsaturated carboxylic acids. Amidation of Leu-98 is essential for obestatin activity.

The protein resides in the secreted. Ghrelin is the ligand for growth hormone secretagogue receptor type 1 (GHSR). Induces the release of growth hormone from the pituitary. Has an appetite-stimulating effect, induces adiposity and stimulates gastric acid secretion. Involved in growth regulation. Functionally, obestatin may be the ligand for GPR39. May have an appetite-reducing effect resulting in decreased food intake. May reduce gastric emptying activity and jejunal motility. This chain is Appetite-regulating hormone (GHRL), found in Felis catus (Cat).